Here is a 178-residue protein sequence, read N- to C-terminus: ATP-dependent protease subunit HslV (178 aa).

The active site involves Thr-7. Na(+) contacts are provided by Gly-162, Cys-165, and Thr-168.

It belongs to the peptidase T1B family. HslV subfamily. As to quaternary structure, a double ring-shaped homohexamer of HslV is capped on each side by a ring-shaped HslU homohexamer. The assembly of the HslU/HslV complex is dependent on binding of ATP.

The protein localises to the cytoplasm. The enzyme catalyses ATP-dependent cleavage of peptide bonds with broad specificity.. Its activity is regulated as follows. Allosterically activated by HslU binding. Its function is as follows. Protease subunit of a proteasome-like degradation complex believed to be a general protein degrading machinery. The protein is ATP-dependent protease subunit HslV of Cupriavidus taiwanensis (strain DSM 17343 / BCRC 17206 / CCUG 44338 / CIP 107171 / LMG 19424 / R1) (Ralstonia taiwanensis (strain LMG 19424)).